Here is a 248-residue protein sequence, read N- to C-terminus: 5'-nucleotidase SurE (248 aa).

The a divalent metal cation site is built by Asp-8, Asp-9, Ser-39, and Asn-91.

It belongs to the SurE nucleotidase family. Requires a divalent metal cation as cofactor.

The protein localises to the cytoplasm. It catalyses the reaction a ribonucleoside 5'-phosphate + H2O = a ribonucleoside + phosphate. In terms of biological role, nucleotidase that shows phosphatase activity on nucleoside 5'-monophosphates. This chain is 5'-nucleotidase SurE, found in Pseudoalteromonas atlantica (strain T6c / ATCC BAA-1087).